The sequence spans 94 residues: uncharacterized protein (94 aa).

A disordered region spans residues 1–22 (MATLQQAQQQNNQLTQQNNQLT). A coiled-coil region spans residues 1–77 (MATLQQAQQQ…NRLHSENHRL (77 aa)).

This is an uncharacterized protein from Acheta domesticus (House cricket).